The chain runs to 888 residues: Alanine--tRNA ligase (888 aa).

Residues H564, H568, C676, and H680 each contribute to the Zn(2+) site.

The protein belongs to the class-II aminoacyl-tRNA synthetase family. Zn(2+) is required as a cofactor.

The protein localises to the cytoplasm. The enzyme catalyses tRNA(Ala) + L-alanine + ATP = L-alanyl-tRNA(Ala) + AMP + diphosphate. Functionally, catalyzes the attachment of alanine to tRNA(Ala) in a two-step reaction: alanine is first activated by ATP to form Ala-AMP and then transferred to the acceptor end of tRNA(Ala). Also edits incorrectly charged Ser-tRNA(Ala) and Gly-tRNA(Ala) via its editing domain. This is Alanine--tRNA ligase from Bartonella tribocorum (strain CIP 105476 / IBS 506).